The chain runs to 212 residues: Ion-translocating oxidoreductase complex subunit G (212 aa).

The chain crosses the membrane as a helical span at residues 9-29 (ASLLGLFALLCTALVALVNQF). FMN phosphoryl threonine is present on threonine 176.

Belongs to the RnfG family. In terms of assembly, the complex is composed of six subunits: RnfA, RnfB, RnfC, RnfD, RnfE and RnfG. FMN is required as a cofactor.

It is found in the cell inner membrane. Its function is as follows. Part of a membrane-bound complex that couples electron transfer with translocation of ions across the membrane. This Shewanella loihica (strain ATCC BAA-1088 / PV-4) protein is Ion-translocating oxidoreductase complex subunit G.